Reading from the N-terminus, the 252-residue chain is Maintenance of carboxysome distribution protein A (252 aa).

Residues Gly11, Gly12, Gly14, Lys15, Thr16, Thr17, Gln41, Glu147, Lys151, Phe182, Arg183, Leu216, Glu217, and Ser218 each contribute to the ATP site. Thr16 provides a ligand contact to Mg(2+).

The protein belongs to the ParA family. McdA subfamily. Self-associates (probably a homodimer), interacts with McdB probably via the C-terminus of both proteins. Shows no signs of filament formation. Homodimerizes in the presence of ATP, making extra nucleotide contacts than with ADP or AMP-PNP. Each subunit binds 1 ATP molecule; Glu-147, Lys-151 and Arg-183 cross the dimer interface to contact ATP in the other subunit, while Phe-182, Arg-183 and Phe-221 stack with the adenine base in their own subunit.

Its subcellular location is the cytoplasm. The protein localises to the nucleoid. It catalyses the reaction ATP + H2O = ADP + phosphate + H(+). In terms of biological role, mcdA and McdB together mediate carboxysome (Cb) spacing, size, ultrastructure and probably inheritance in the cell. Together they prevent Cb aggregation. McdA is an ATPase that forms dynamic gradients on the nucleoid in response to adapter protein McdB, which associates with carboxysomes. The interplay between McdA gradients on the nucleoid and McdB-bound carboxysomes result in the equal spacing of Cbs along the cell length. Binds nucleoid DNA in an ATP-dependent manner; neither ADP nor ATP-gamma-S support DNA binding. Upon ATP-binding dimerizes and binds nucleoid DNA; the (McdA-ATP)2 dimer transiently binds McdB-bound Cbs. McdA's ATPase activity is stimulated 2-fold by DNA and McdB; ATP hydrolysis causes McdA release from DNA. Overexpression leads to loss of McdA oscillation, diffuse nucleoid staining by McdA with formation of large carboxysome aggregates that are in regions depleted of McdA; McdA remains nucleoid-associated. Its function is as follows. Mutagenesis studies (characterized in vivo) suggest ATP binding, protein dimerization and a conformational change are necessary for nucleoid DNA-binding and binding to McdB-bound Cbs, which tethers Cbs to the nucleoid. Eventual McdB-stimulated ATP hydrolysis causes de-dimerization of McdA which no longer binds the nucleoid and releases McdB and Cbs. McdB-bound Cbs then move to a region of higher McdA concentration, distributing Cbs across the nucleoid. Incorrect positioning (aggregation) of carboxysomes results in reduced CO(2) fixation by encapsulated ribulose-1,5-bisphosphate carboxylase (RuBisCO, cbbL/cbbS), which leads to slower growth, cell elongation, asymmetric cell division and an increase in RuBisCO levels. The chain is Maintenance of carboxysome distribution protein A from Synechococcus elongatus (strain ATCC 33912 / PCC 7942 / FACHB-805) (Anacystis nidulans R2).